A 446-amino-acid polypeptide reads, in one-letter code: Histidine--tRNA ligase (446 aa).

This sequence belongs to the class-II aminoacyl-tRNA synthetase family. In terms of assembly, homodimer.

It localises to the cytoplasm. It carries out the reaction tRNA(His) + L-histidine + ATP = L-histidyl-tRNA(His) + AMP + diphosphate + H(+). This chain is Histidine--tRNA ligase, found in Burkholderia pseudomallei (strain 1710b).